The chain runs to 194 residues: AN1-type zinc finger protein 2A (194 aa).

2 consecutive AN1-type zinc fingers follow at residues proline 4–valine 52 and lysine 94–isoleucine 142. Residues cysteine 10, cysteine 15, cysteine 25, cysteine 28, cysteine 33, histidine 36, histidine 42, cysteine 44, cysteine 100, cysteine 105, cysteine 115, cysteine 118, cysteine 123, histidine 126, histidine 132, and cysteine 134 each contribute to the Zn(2+) site. The disordered stretch occupies residues glycine 145–serine 164.

It is found in the cytoplasm. The protein localises to the nucleus. The sequence is that of AN1-type zinc finger protein 2A (ZFAND2A) from Pongo abelii (Sumatran orangutan).